Here is a 141-residue protein sequence, read N- to C-terminus: Hemoglobin subunit alpha-D (141 aa).

Residues 1 to 141 enclose the Globin domain; that stretch reads MLTADDKKLL…VAAVLAEKYR (141 aa). Residues His58 and His87 each contribute to the heme b site.

This sequence belongs to the globin family. Heterotetramer of two alpha-D chains and two beta chains. Red blood cells.

Involved in oxygen transport from the lung to the various peripheral tissues. In Chloephaga melanoptera (Andean goose), this protein is Hemoglobin subunit alpha-D (HBAD).